Reading from the N-terminus, the 37-residue chain is MKIRASARKICEKCRLIRRRGRILIICSNPRHKQRQG.

It belongs to the bacterial ribosomal protein bL36 family.

Its subcellular location is the plastid. It is found in the chloroplast. This is Large ribosomal subunit protein bL36c from Populus alba (White poplar).